The following is a 241-amino-acid chain: MHIRMVGTGSAFAKKFDNNNALLEQDGCCLLIDCGITLPKALYQMGLAFPEIDAVLISHIHADHVGGLEEFAFQMMFKYNRKPVLFIADTLIEPLWEHTLRGGLTQDPLNKLEHFFDVRPIIANTETELFPGLRVKLLPTKHIPNKPSYSFLFNDRFFYSADMRFDKELLLRLADGGVQTIFHDCQLEEPGVVHASLNELLTLPESVQKKTWLMHYGDTIDQYQGRTGHMRIVEPQRRYEV.

Residues 17–215 (DNNNALLEQD…SVQKKTWLMH (199 aa)) are beta-lactamase-like. Zn(2+)-binding residues include His-59, His-61, Asp-63, His-64, His-142, Asp-162, and His-215.

This sequence belongs to the nuclease anti-Pycsar protein Apyc1 family. Homodimer. Zn(2+) is required as a cofactor.

The catalysed reaction is 3',5'-cyclic CMP + H2O = CMP + H(+). It catalyses the reaction 3',5'-cyclic UMP + H2O = UMP + H(+). In terms of biological role, counteracts the endogenous Pycsar antiviral defense system. Phosphodiesterase that enables metal-dependent hydrolysis of host cyclic nucleotide Pycsar defense signals such as cCMP and cUMP. In Paenibacillus harenae, this protein is Anti-Pycsar protein Apyc1.